The following is an 808-amino-acid chain: Auxin response factor 4 (808 aa).

Over residues 1 to 13 (MPPAAMAPPPPPQ) the composition is skewed to pro residues. Residues 1 to 20 (MPPAAMAPPPPPQGSSTGDP) form a disordered region. A DNA-binding region (TF-B3) is located at residues 129-231 (FCKTLTASDT…ELRVGVRRAM (103 aa)). Positions 342-352 (PSTIPRPDRVS) are enriched in basic and acidic residues. Disordered stretches follow at residues 342-433 (PSTI…DSDV), 661-691 (TAGT…VAST), and 778-808 (QKMN…KSDN). Residues 402–432 (AQAQRSQNSTVLQGQEQMTLRSNLTESNDSD) are compositionally biased toward polar residues. A PB1 domain is found at 692–785 (RSCTKVHKQG…EVQKMNSKSN (94 aa)). Residues 787–799 (PRKDDSSENEKGH) show a composition bias toward basic and acidic residues.

The protein belongs to the ARF family. In terms of assembly, homodimers and heterodimers. In terms of tissue distribution, expressed in roots, culms, leaves and young panicles.

Its subcellular location is the nucleus. In terms of biological role, auxin response factors (ARFs) are transcriptional factors that bind specifically to the DNA sequence 5'-TGTCTC-3' found in the auxin-responsive promoter elements (AuxREs). The protein is Auxin response factor 4 (ARF4) of Oryza sativa subsp. japonica (Rice).